Consider the following 450-residue polypeptide: Signal recognition particle 54 kDa protein (450 aa).

Residues 107-114 (GIQGSGKT), 188-192 (DTAGR), and 247-250 (TKLD) contribute to the GTP site.

Belongs to the GTP-binding SRP family. SRP54 subfamily. As to quaternary structure, part of the signal recognition particle protein translocation system, which is composed of SRP and FtsY. Archaeal SRP consists of a 7S RNA molecule of 300 nucleotides and two protein subunits: SRP54 and SRP19.

Its subcellular location is the cytoplasm. The enzyme catalyses GTP + H2O = GDP + phosphate + H(+). Functionally, involved in targeting and insertion of nascent membrane proteins into the cytoplasmic membrane. Binds to the hydrophobic signal sequence of the ribosome-nascent chain (RNC) as it emerges from the ribosomes. The SRP-RNC complex is then targeted to the cytoplasmic membrane where it interacts with the SRP receptor FtsY. The polypeptide is Signal recognition particle 54 kDa protein (Methanococcus vannielii (strain ATCC 35089 / DSM 1224 / JCM 13029 / OCM 148 / SB)).